The following is a 212-amino-acid chain: Probable nicotinate-nucleotide adenylyltransferase (212 aa).

It belongs to the NadD family.

It carries out the reaction nicotinate beta-D-ribonucleotide + ATP + H(+) = deamido-NAD(+) + diphosphate. It functions in the pathway cofactor biosynthesis; NAD(+) biosynthesis; deamido-NAD(+) from nicotinate D-ribonucleotide: step 1/1. In terms of biological role, catalyzes the reversible adenylation of nicotinate mononucleotide (NaMN) to nicotinic acid adenine dinucleotide (NaAD). The sequence is that of Probable nicotinate-nucleotide adenylyltransferase from Saccharopolyspora erythraea (strain ATCC 11635 / DSM 40517 / JCM 4748 / NBRC 13426 / NCIMB 8594 / NRRL 2338).